The primary structure comprises 873 residues: Alanine--tRNA ligase (873 aa).

Positions 557, 561, 659, and 663 each coordinate Zn(2+).

This sequence belongs to the class-II aminoacyl-tRNA synthetase family. Zn(2+) is required as a cofactor.

The protein localises to the cytoplasm. It catalyses the reaction tRNA(Ala) + L-alanine + ATP = L-alanyl-tRNA(Ala) + AMP + diphosphate. Its function is as follows. Catalyzes the attachment of alanine to tRNA(Ala) in a two-step reaction: alanine is first activated by ATP to form Ala-AMP and then transferred to the acceptor end of tRNA(Ala). Also edits incorrectly charged Ser-tRNA(Ala) and Gly-tRNA(Ala) via its editing domain. The sequence is that of Alanine--tRNA ligase from Nitrosococcus oceani (strain ATCC 19707 / BCRC 17464 / JCM 30415 / NCIMB 11848 / C-107).